Reading from the N-terminus, the 486-residue chain is MATFKDACYHYKRLNKLNHAVLKLGVNDAWRPSPPTKYKGWCLDCCQHTDLTYCRGCSIYHVCQWCNQYGRCFLDDEPHLLRMRTFKNDITKEDLANLIDMYNVLFPVNQKIVNKFINNTKQHKCRNELVPQWYNHLLMPITLQSLSIELSGDIYYIFGYYDDMKNVNQTPFSFVNLIDIYDRLLLDDVNFNRMSFLPLVLQQEYAIRYFSKSRFISEEKRQINHSHFSINILENLHNPNFKIQITRNCSTMFGKWNEACTLVKDIGTYFEILKTSHVEFYDVSPRCRMFTQHKLKAVSKVIKPNYATSNHRALATEVYNCRWCSVNTSFIVWNDFRLRNICDNVLNFIRALVKSNTRIGHCSSQEQIHSYIRDVFDVCDENKWNTSVSGIFNCLESVELDGVHYVLLNHEVNWDVANVLIQNIGKIPQILTLNDVITALHSMIYDWFDIRYMRNTPTTTFTVDKLRQLCARRKIADYDSGLSDVE.

An RNA-binding region spans residues 1–81; that stretch reads MATFKDACYH…CFLDDEPHLL (81 aa). The zinc-binding domain stretch occupies residues 42–79; the sequence is CLDCCQHTDLTYCRGCSIYHVCQWCNQYGRCFLDDEPH. The tract at residues 82–176 is important for cytoskeleton localization; sequence RMRTFKNDIT…VNQTPFSFVN (95 aa). The tract at residues 317-486 is interaction with host IRF3; the sequence is EVYNCRWCSV…DYDSGLSDVE (170 aa). The short motif at 479–483 is the IKBKB-like degron (ILD) motif element; sequence DSGLS. The pLxIS motif signature appears at 480–483; sequence SGLS.

Belongs to the rotavirus NSP1 family. As to quaternary structure, interacts (via C-terminus) with host IRF3; this interaction leads to IRF3 degradation. Interacts with host IRF7; this interaction leads to IRF7 degradation. Interacts with host CUL1 and CUL3. Interacts with host BTRC. Post-translationally, the C-terminal region is phosphorylated by host CKII/CSNK2A1. Phosphorylation of the DSGXS motif is essential for host NF-kappa-B inhibition.

The protein resides in the host cytoplasm. Its subcellular location is the host cytoskeleton. Plays a role in the inhibition of host innate immunity by inducing the degradation of key host factors required to activate interferon production such as IRF3, IRF5 or IRF7. Associates with components of cullin RING ligases (CRLs) including CUL1 or CUL3, which are essential multisubunit ubiquitination complexes, to modulate their activities. Recognizes the host NF-kappa-B regulator BTRC through the presence of a DSGXS motif in the C-terminal substrate recognition domain. This is Non-structural protein 1 from Rotavirus A (strain RVA/Pig/Mexico/YM/1983/G11P9[7]) (RV-A).